The primary structure comprises 90 residues: UPF0298 protein BLi01717/BL02989 (90 aa).

Belongs to the UPF0298 family.

It is found in the cytoplasm. The polypeptide is UPF0298 protein BLi01717/BL02989 (Bacillus licheniformis (strain ATCC 14580 / DSM 13 / JCM 2505 / CCUG 7422 / NBRC 12200 / NCIMB 9375 / NCTC 10341 / NRRL NRS-1264 / Gibson 46)).